A 777-amino-acid chain; its full sequence is ATPase ARSA1 (777 aa).

ATP is bound at residue 110–117; sequence KGGVGKTS. Residue Asp139 is part of the active site. Residues Asn372 and 454–461 each bind ATP; that span reads KGGVGKTS. Asp483 is an active-site residue. An ATP-binding site is contributed by Asn712.

It belongs to the arsA ATPase family. In terms of assembly, monomer. Interacts with TOC34.

It is found in the cytoplasm. The protein resides in the cytosol. In terms of biological role, ATPase required for the post-translational delivery of tail-anchored (TA) proteins to the chloroplast. Required for the accumulation of TOC34, an essential component of the outer chloroplast membrane translocon (TOC) complex. Recognizes and selectively binds the transmembrane domain of TA proteins in the cytosol. This complex then targets to chloroplast, where the tail-anchored protein is released for insertion. This process is regulated by ATP binding and hydrolysis. The polypeptide is ATPase ARSA1 (Chlamydomonas reinhardtii (Chlamydomonas smithii)).